The following is a 2967-amino-acid chain: BEACH domain-containing protein lvsD (2967 aa).

10 disordered regions span residues 1–25 (MSSPLKFPFKQQQQQQQQQRSRIGG), 322–364 (NNNN…SSNS), 588–615 (ILSIDPNNNNNNNNNNNNNIQQPQQQQL), 917–936 (NNSNNNNNNNNSNSNNNNIN), 1077–1105 (GGSNNNNNNNNNNSNNNKDKIDSNNKDKD), 1173–1220 (NTSS…SDHR), 1583–1613 (NNNSGNNNSGNNINNNNNNNNNNTNLNNNEN), 1831–1859 (QQQQQQSQQSLQLPPSPSISNAGSSSSVV), 1921–2009 (PQKT…TLNN), and 2029–2062 (KSTLTSSSSSSPSSNNNNGNSNNNSNNNNNNNKN). One can recognise a BEACH 1 domain in the interval 229–491 (MTFRKAPSSV…QDLFRKGSNY (263 aa)). Residues 1079-1092 (SNNNNNNNNNNSNN) show a composition bias toward low complexity. The segment covering 1093–1105 (NKDKIDSNNKDKD) has biased composition (basic and acidic residues). 6 stretches are compositionally biased toward low complexity: residues 1185–1194 (PLLTSTKSMS), 1583–1611 (NNNSGNNNSGNNINNNNNNNNNNTNLNNN), 1831–1857 (QQQQQQSQQSLQLPPSPSISNAGSSSS), 1926–1980 (QNQH…SFSN), 1993–2006 (NIITTTTTTTTTST), and 2034–2062 (SSSSSSPSSNNNNGNSNNNSNNNNNNNKN). The region spanning 2060-2162 (NKNIKLEFST…ICAQILKLIG (103 aa)) is the BEACH-type PH domain. 2 BEACH domains span residues 2202 to 2492 (TPQQ…HPQR) and 2628 to 2785 (NSRV…IYSN). WD repeat units lie at residues 2658 to 2710 (NHKS…SDHH) and 2720 to 2761 (GHNF…KSIQ). 2 disordered regions span residues 2798 to 2820 (SATTTTTTRDDESSSSSLSSSNT) and 2915 to 2934 (PSTSVSGDSNSNNNNNNNGN). Low complexity-rich tracts occupy residues 2811 to 2820 (SSSSLSSSNT) and 2924 to 2934 (NSNNNNNNNGN).

The sequence is that of BEACH domain-containing protein lvsD (lvsD) from Dictyostelium discoideum (Social amoeba).